Consider the following 62-residue polypeptide: U8-theraphotoxin-Cg1a 2 (62 aa).

A signal peptide spans 1–21 (MKTLVLFIIFGLAALFLLSSA). Residues 22–29 (TELEETER) constitute a propeptide that is removed on maturation. 3 disulfide bridges follow: Cys-31–Cys-46, Cys-38–Cys-51, and Cys-45–Cys-58.

Belongs to the neurotoxin 10 (Hwtx-1) family. 30 (Jztx-14) subfamily. Expressed by the venom gland.

The protein localises to the secreted. Functionally, probable ion channel inhibitor. This Chilobrachys guangxiensis (Chinese earth tiger tarantula) protein is U8-theraphotoxin-Cg1a 2.